Reading from the N-terminus, the 464-residue chain is Phospho-2-dehydro-3-deoxyheptonate aldolase AroG (464 aa).

Position 87 (cysteine 87) interacts with Mn(2+). Phosphoenolpyruvate contacts are provided by residues arginine 126, 285 to 286, lysine 308, and arginine 339; that span reads ER. Mn(2+)-binding residues include histidine 371, glutamate 413, and aspartate 443.

Belongs to the class-II DAHP synthase family. Homodimer. Probably interacts with MSMEG_5536. Mn(2+) is required as a cofactor. Requires Co(2+) as cofactor. The cofactor is Cd(2+).

It catalyses the reaction D-erythrose 4-phosphate + phosphoenolpyruvate + H2O = 7-phospho-2-dehydro-3-deoxy-D-arabino-heptonate + phosphate. It participates in metabolic intermediate biosynthesis; chorismate biosynthesis; chorismate from D-erythrose 4-phosphate and phosphoenolpyruvate: step 1/7. In terms of biological role, catalyzes an aldol-like condensation reaction between phosphoenolpyruvate (PEP) and D-erythrose 4-phosphate (E4P) to generate 3-deoxy-D-arabino-heptulosonate 7-phosphate (DAH7P) and inorganic phosphate. The chain is Phospho-2-dehydro-3-deoxyheptonate aldolase AroG (aroG) from Mycolicibacterium smegmatis (strain ATCC 700084 / mc(2)155) (Mycobacterium smegmatis).